Consider the following 290-residue polypeptide: MKVIVLLLVLAVMQPVIQSQPFPGTEELPMTRRPPKKELEYWCTYAKSCDFCWNCRHGVCKNKVFEKHPLIKKNDYIQICRVSRYNDRCSYFTDSRIRRFHIMSCTNPTYYDWFDELMQVKEDRVIDVENIKHTCLCMIATIALIGYIRKQYSRMQLQAATRLLIFLGLYVLLGILMTNIIMNLPLSTDNPMQMRRPPERDLKFWCTYAKHCDFCWTCKDGMCKNKVFSDHPIITQNDYIVNCTVSRWHDRCMYEAHFRIHYQHNMNCSQPKDLEWFIELKRHLINQDDL.

Helical transmembrane passes span methionine 1 to serine 19, valine 128 to isoleucine 148, and leucine 163 to asparagine 183. N-linked (GlcNAc...) asparagine; by host glycosylation is found at asparagine 242 and asparagine 267.

The protein belongs to the asfivirus MGF 110 family.

It is found in the host membrane. In terms of biological role, plays a role in virus cell tropism, and may be required for efficient virus replication in macrophages. This is Protein MGF 110-9L from Ornithodoros (relapsing fever ticks).